Reading from the N-terminus, the 199-residue chain is Small ribosomal subunit protein uS4 (199 aa).

The 61-residue stretch at 91–151 (SRLDNLVYRF…EKSKNVKAIA (61 aa)) folds into the S4 RNA-binding domain.

Belongs to the universal ribosomal protein uS4 family. As to quaternary structure, part of the 30S ribosomal subunit. Contacts protein S5. The interaction surface between S4 and S5 is involved in control of translational fidelity.

One of the primary rRNA binding proteins, it binds directly to 16S rRNA where it nucleates assembly of the body of the 30S subunit. In terms of biological role, with S5 and S12 plays an important role in translational accuracy. This is Small ribosomal subunit protein uS4 from Exiguobacterium sp. (strain ATCC BAA-1283 / AT1b).